The sequence spans 150 residues: D-aminoacyl-tRNA deacylase (150 aa).

A Gly-cisPro motif, important for rejection of L-amino acids motif is present at residues 138–139; it reads GP.

The protein belongs to the DTD family. In terms of assembly, homodimer.

It localises to the cytoplasm. The catalysed reaction is glycyl-tRNA(Ala) + H2O = tRNA(Ala) + glycine + H(+). The enzyme catalyses a D-aminoacyl-tRNA + H2O = a tRNA + a D-alpha-amino acid + H(+). Its function is as follows. An aminoacyl-tRNA editing enzyme that deacylates mischarged D-aminoacyl-tRNAs. Also deacylates mischarged glycyl-tRNA(Ala), protecting cells against glycine mischarging by AlaRS. Acts via tRNA-based rather than protein-based catalysis; rejects L-amino acids rather than detecting D-amino acids in the active site. By recycling D-aminoacyl-tRNA to D-amino acids and free tRNA molecules, this enzyme counteracts the toxicity associated with the formation of D-aminoacyl-tRNA entities in vivo and helps enforce protein L-homochirality. In Flavobacterium johnsoniae (strain ATCC 17061 / DSM 2064 / JCM 8514 / BCRC 14874 / CCUG 350202 / NBRC 14942 / NCIMB 11054 / UW101) (Cytophaga johnsonae), this protein is D-aminoacyl-tRNA deacylase.